An 89-amino-acid chain; its full sequence is UPF0297 protein SEQ_2150 (89 aa).

It belongs to the UPF0297 family.

This chain is UPF0297 protein SEQ_2150, found in Streptococcus equi subsp. equi (strain 4047).